A 396-amino-acid chain; its full sequence is Elongation factor Tu (396 aa).

One can recognise a tr-type G domain in the interval 10-206; that stretch reads KPHVNVGTIG…ALDSYIPTPE (197 aa). A G1 region spans residues 19-26; the sequence is GHVDHGKT. 19–26 contributes to the GTP binding site; that stretch reads GHVDHGKT. Residue Thr-26 coordinates Mg(2+). The G2 stretch occupies residues 60–64; that stretch reads GITIN. Residues 81-84 form a G3 region; that stretch reads DCPG. GTP is bound by residues 81-85 and 136-139; these read DCPGH and NKCD. Residues 136–139 form a G4 region; the sequence is NKCD. The tract at residues 174–176 is G5; it reads SAK.

The protein belongs to the TRAFAC class translation factor GTPase superfamily. Classic translation factor GTPase family. EF-Tu/EF-1A subfamily. In terms of assembly, monomer.

It is found in the cytoplasm. It catalyses the reaction GTP + H2O = GDP + phosphate + H(+). GTP hydrolase that promotes the GTP-dependent binding of aminoacyl-tRNA to the A-site of ribosomes during protein biosynthesis. In Herminiimonas arsenicoxydans, this protein is Elongation factor Tu.